The chain runs to 445 residues: Sensor protein kinase CarS (445 aa).

The N-terminal stretch at 1–24 (MRSIQRRLSVGLFAVLLVVGLVLA) is a signal peptide. A helical membrane pass occupies residues 150–170 (FARVQWMGLGAGALALLLVLL). The region spanning 177–228 (RRSLRPLEEVRLQIAQLQQGQRSQLDNQAPEELEPLVEQINHLLAHTEETLK) is the HAMP domain. One can recognise a Histidine kinase domain in the interval 236–438 (NLGHALKTPL…RVSVELPLQK (203 aa)). Phosphohistidine; by autocatalysis is present on His-239.

It localises to the membrane. It carries out the reaction ATP + protein L-histidine = ADP + protein N-phospho-L-histidine.. In terms of biological role, member of the two-component regulatory system CarS/CarR that regulates the expression of multiple genes involved in calcium signaling and homeostasis including CarO and CarP. May function as a membrane-associated protein kinase that phosphorylates CarR in response to environmental signals leading to activation of specific gene promoters. The protein is Sensor protein kinase CarS (carS) of Pseudomonas aeruginosa (strain ATCC 15692 / DSM 22644 / CIP 104116 / JCM 14847 / LMG 12228 / 1C / PRS 101 / PAO1).